Here is a 130-residue protein sequence, read N- to C-terminus: Glycine cleavage system H protein (130 aa).

The 83-residue stretch at 25–107 (IATIGITEFA…YGEGWFLKVR (83 aa)) folds into the Lipoyl-binding domain. The residue at position 66 (Lys66) is an N6-lipoyllysine.

The protein belongs to the GcvH family. In terms of assembly, the glycine cleavage system is composed of four proteins: P, T, L and H. (R)-lipoate is required as a cofactor.

The glycine cleavage system catalyzes the degradation of glycine. The H protein shuttles the methylamine group of glycine from the P protein to the T protein. The polypeptide is Glycine cleavage system H protein (Trichormus variabilis (strain ATCC 29413 / PCC 7937) (Anabaena variabilis)).